The sequence spans 306 residues: Putative lipid kinase Sca_1050 (306 aa).

One can recognise a DAGKc domain in the interval 3 to 139; sequence QHFHRGILFY…FDVLKVNDTY (137 aa). Residues Ser44, 74 to 80, and Thr101 each bind ATP; that span reads GDGTVNE. Mg(2+) contacts are provided by Ser220, Asp223, and Glu225. Catalysis depends on Glu281, which acts as the Proton acceptor.

This sequence belongs to the diacylglycerol/lipid kinase family. The cofactor is Mg(2+).

May catalyze the ATP-dependent phosphorylation of lipids other than diacylglycerol (DAG). This Staphylococcus carnosus (strain TM300) protein is Putative lipid kinase Sca_1050.